Reading from the N-terminus, the 1183-residue chain is Formin-like protein (1183 aa).

Disordered regions lie at residues 1-44 (MGAV…SISS) and 63-82 (QHVR…PTTD). Residues 23 to 36 (PHSHAHHHSMRNGH) are compositionally biased toward basic residues. Over residues 63-79 (QHVRQPSLRSRSQQPMP) the composition is skewed to polar residues. The GBD/FH3 domain maps to 76–559 (QPMPTTDELD…HNEQELKKRD (484 aa)). At Ser225 the chain carries Phosphoserine. Positions 572–584 (LSRSLPRSASSGD) are enriched in polar residues. A disordered region spans residues 572–681 (LSRSLPRSAS…PPVAGFMPAP (110 aa)). Pro residues-rich tracts occupy residues 605 to 614 (LPPPPPPMPA) and 622 to 640 (APPP…PPGF). Residues 641–654 (SPLGSPSGSLASTA) are compositionally biased toward low complexity. The 402-residue stretch at 687-1088 (IKRKVPTKYK…AALAASKKEN (402 aa)) folds into the FH2 domain. The DAD domain maps to 1136-1169 (DEVYNGALEDILLGLKSEPYRRADAVRRSQRRRI).

It belongs to the formin homology family. In terms of assembly, self-associates. Interacts (via GBD/FH3 domain) with Cdc42; the interaction is stronger with the GTP bound form of Cdc42.

In terms of biological role, together with Cdc42, involved in establishment of planar cell polarity in the developing compound eye by contributing to ommatidial rotation. Together with DAAM and Cdc42, has a role in neuronal development of mushroom bodies. This Drosophila melanogaster (Fruit fly) protein is Formin-like protein.